The primary structure comprises 236 residues: Orotidine 5'-phosphate decarboxylase (236 aa).

Residues D14, K36, D63–T72, T122, R183, Q192, G212, and R213 contribute to the substrate site. K65 serves as the catalytic Proton donor.

This sequence belongs to the OMP decarboxylase family. Type 1 subfamily. In terms of assembly, homodimer.

It carries out the reaction orotidine 5'-phosphate + H(+) = UMP + CO2. Its pathway is pyrimidine metabolism; UMP biosynthesis via de novo pathway; UMP from orotate: step 2/2. In terms of biological role, catalyzes the decarboxylation of orotidine 5'-monophosphate (OMP) to uridine 5'-monophosphate (UMP). The sequence is that of Orotidine 5'-phosphate decarboxylase from Chromohalobacter salexigens (strain ATCC BAA-138 / DSM 3043 / CIP 106854 / NCIMB 13768 / 1H11).